The chain runs to 1620 residues: ALK tyrosine kinase receptor (1620 aa).

Positions 1–18 are cleaved as a signal peptide; it reads MGAIGLLWLLPLLLSTAA. Residues 19–1038 are Extracellular-facing; the sequence is VGSGMGTGQR…PHLPLSLILS (1020 aa). The tract at residues 48–70 is heparin-binding region; the sequence is RLQRKSLAVDFVVPSLFRVYARD. Residues asparagine 169, asparagine 244, asparagine 285, asparagine 324, asparagine 411, asparagine 424, asparagine 445, asparagine 563, asparagine 571, and asparagine 627 are each glycosylated (N-linked (GlcNAc...) asparagine). Residues 264–427 enclose the MAM 1 domain; sequence LECSFDFPCE…DFFALKNCSE (164 aa). An LDL-receptor class A domain is found at 437–473; sequence LQSSFTCWNGTVLQLGQACDFHQDCAQGEDESQMCRK. The MAM 2 domain maps to 478-636; sequence FYCNFEDGFC…NISISLDCYL (159 aa). Residues 650 to 674 are disordered; it reads PKSRNLFERNPNKELKPGENSPRQT. Basic and acidic residues predominate over residues 654-666; it reads NLFERNPNKELKP. The cysteines at positions 688 and 701 are disulfide-linked. Residue asparagine 709 is glycosylated (N-linked (GlcNAc...) asparagine). Cysteine 783 and cysteine 794 are joined by a disulfide. N-linked (GlcNAc...) asparagine glycans are attached at residues asparagine 808, asparagine 863, asparagine 864, and asparagine 886. Cysteine 906 and cysteine 928 are disulfide-bonded. An N-linked (GlcNAc...) asparagine glycan is attached at asparagine 986. 3 cysteine pairs are disulfide-bonded: cysteine 987/cysteine 995, cysteine 990/cysteine 1006, and cysteine 1008/cysteine 1021. The interval 987-1025 is EGF-like; the sequence is CSHCEVDECHMDPESHKVICFCDHGTVLAEDGVSCIVSP. Residues 1039–1059 traverse the membrane as a helical segment; that stretch reads VVTSALVAALVLAFSGIMIVY. The Cytoplasmic portion of the chain corresponds to 1060-1620; the sequence is RRKHQELQAM…SKNSMNQPGP (561 aa). Phosphotyrosine occurs at positions 1078, 1092, and 1096. The Protein kinase domain occupies 1116–1392; sequence ITLIRGLGHG…IEYCTQDPDV (277 aa). Histidine 1124 is a binding site for ATP. Tyrosine 1131 bears the Phosphotyrosine mark. ATP-binding positions include lysine 1150 and 1197-1199; that span reads ELM. Aspartate 1249 acts as the Proton acceptor in catalysis. Aspartate 1270 lines the ATP pocket. At tyrosine 1278 the chain carries Phosphotyrosine. The segment at 1408 to 1463 is disordered; that stretch reads EEKVPVRPKDPEGVPPLLVSQQAKREEERSPAAPPPLPTTSSGKAAKKPTAAEISV. The segment covering 1410-1419 has biased composition (basic and acidic residues); sequence KVPVRPKDPE. Tyrosine 1507 is modified (phosphotyrosine). The disordered stretch occupies residues 1514 to 1540; the sequence is KPTKKNNPIAKKEPHDRGNLGLEGSCT. Phosphotyrosine is present on tyrosine 1604.

The protein belongs to the protein kinase superfamily. Tyr protein kinase family. Insulin receptor subfamily. In terms of assembly, homodimer; homodimerizes following heparin- and ligand-binding. Interacts with CBL, IRS1, PIK3R1 and PLCG1. Interacts with FRS2 and SHC1. Interacts with PTN and MDK. Phosphorylated at tyrosine residues by autocatalysis, which activates kinase activity. In cells not stimulated by a ligand, receptor protein tyrosine phosphatase beta and zeta complex (PTPRB/PTPRZ1) dephosphorylates ALK at the sites in ALK that are undergoing autophosphorylation through autoactivation. Phosphorylation at Tyr-1507 is critical for SHC1 association. In terms of processing, N-glycosylated. Expressed in brain and CNS. Also expressed in the small intestine and testis, but not in normal lymphoid cells.

The protein resides in the cell membrane. The catalysed reaction is L-tyrosyl-[protein] + ATP = O-phospho-L-tyrosyl-[protein] + ADP + H(+). Its activity is regulated as follows. Activated upon ALKAL2 ligand-binding. ALKAL2-driven activation is coupled with heparin-binding. Following ligand-binding, homodimerizes and autophosphorylates, activating its kinase activity. Inactivated through dephosphorylation by receptor protein tyrosine phosphatase beta and zeta complex (PTPRB/PTPRZ1) when there is no stimulation by a ligand. Staurosporine, crizotinib and CH5424802 act as inhibitors of ALK kinase activity. Its function is as follows. Neuronal receptor tyrosine kinase that is essentially and transiently expressed in specific regions of the central and peripheral nervous systems and plays an important role in the genesis and differentiation of the nervous system. Also acts as a key thinness protein involved in the resistance to weight gain: in hypothalamic neurons, controls energy expenditure acting as a negative regulator of white adipose tissue lipolysis and sympathetic tone to fine-tune energy homeostasis. Following activation by ALKAL2 ligand at the cell surface, transduces an extracellular signal into an intracellular response. In contrast, ALKAL1 is not a potent physiological ligand for ALK. Ligand-binding to the extracellular domain induces tyrosine kinase activation, leading to activation of the mitogen-activated protein kinase (MAPK) pathway. Phosphorylates almost exclusively at the first tyrosine of the Y-x-x-x-Y-Y motif. Induces tyrosine phosphorylation of CBL, FRS2, IRS1 and SHC1, as well as of the MAP kinases MAPK1/ERK2 and MAPK3/ERK1. ALK activation may also be regulated by pleiotrophin (PTN) and midkine (MDK). PTN-binding induces MAPK pathway activation, which is important for the anti-apoptotic signaling of PTN and regulation of cell proliferation. MDK-binding induces phosphorylation of the ALK target insulin receptor substrate (IRS1), activates mitogen-activated protein kinases (MAPKs) and PI3-kinase, resulting also in cell proliferation induction. Drives NF-kappa-B activation, probably through IRS1 and the activation of the AKT serine/threonine kinase. Recruitment of IRS1 to activated ALK and the activation of NF-kappa-B are essential for the autocrine growth and survival signaling of MDK. The chain is ALK tyrosine kinase receptor from Homo sapiens (Human).